A 302-amino-acid chain; its full sequence is Uricase (302 aa).

Residues Lys-22 and Thr-67 each act as charge relay system in the active site. Residues Thr-67, Asp-68, Phe-163, Arg-180, Gln-223, and Asn-249 each coordinate urate. The active-site Charge relay system is the His-251.

This sequence belongs to the uricase family. In terms of assembly, homotetramer.

The catalysed reaction is urate + O2 + H2O = 5-hydroxyisourate + H2O2. It participates in purine metabolism; urate degradation; (S)-allantoin from urate: step 1/3. In terms of biological role, catalyzes the oxidation of uric acid to 5-hydroxyisourate, which is further processed to form (S)-allantoin. This Arthrobacter globiformis protein is Uricase (uox).